The following is a 377-amino-acid chain: MSRQESSNKFFIKKILREYYSRKPLEEPLYIHKREIAIHSLEDEAYIRHLSFPSITHLYNFILNEKTPLHLYYSSAYYESPSVNKMELKGWIGSDLMFDLDSDHYPGCDKILSICIEENTIYDGKIKTCPKTESKPVIHPLIKTECIQKAYRDALRIKYILEDELGLKNIKIYFSGNRGFHVKVIDEKIWDLESDERREIASYISLENFDINKLFPVIGKRKKYVIITRNEHGIRKRVLDYVIKNNIVNGNELFIKLPLKLLEETINDLTIPIDIVVTMDISRLSRFGNSINGKSGLITKLIEPLDNYEFDINDFCPWSGNIVVKPLIDISGLQVFDEKIDLKRGVKKILDSKIAVYLTLKGIVKIISDEKLVIKNV.

Catalysis depends on residues Asp-99, Asp-101, and Asp-274.

The protein belongs to the eukaryotic-type primase small subunit family. In terms of assembly, heterodimer of a small subunit (PriS) and a large subunit (PriL). It depends on Mg(2+) as a cofactor. Mn(2+) serves as cofactor.

In terms of biological role, catalytic subunit of DNA primase, an RNA polymerase that catalyzes the synthesis of short RNA molecules used as primers for DNA polymerase during DNA replication. The small subunit contains the primase catalytic core and has DNA synthesis activity on its own. Binding to the large subunit stabilizes and modulates the activity, increasing the rate of DNA synthesis while decreasing the length of the DNA fragments, and conferring RNA synthesis capability. The DNA polymerase activity may enable DNA primase to also catalyze primer extension after primer synthesis. May also play a role in DNA repair. The protein is DNA primase small subunit PriS of Staphylothermus marinus (strain ATCC 43588 / DSM 3639 / JCM 9404 / F1).